We begin with the raw amino-acid sequence, 210 residues long: Holliday junction resolvase RecU (210 aa).

Mg(2+)-binding residues include T93, D95, E108, and Q127.

Belongs to the RecU family. Requires Mg(2+) as cofactor.

It is found in the cytoplasm. The enzyme catalyses Endonucleolytic cleavage at a junction such as a reciprocal single-stranded crossover between two homologous DNA duplexes (Holliday junction).. Endonuclease that resolves Holliday junction intermediates in genetic recombination. Cleaves mobile four-strand junctions by introducing symmetrical nicks in paired strands. Promotes annealing of linear ssDNA with homologous dsDNA. Required for DNA repair, homologous recombination and chromosome segregation. The polypeptide is Holliday junction resolvase RecU (Lactobacillus helveticus (strain DPC 4571)).